Reading from the N-terminus, the 350-residue chain is Putative ATP-binding protein BruAb2_0487 (350 aa).

The 231-residue stretch at 4–234 folds into the ABC transporter domain; it reads VSLRGISKTF…PANKFVAGFI (231 aa). An ATP-binding site is contributed by 36-43; that stretch reads GPSGCGKS.

It belongs to the ABC transporter superfamily. In terms of assembly, the complex is composed of two ATP-binding proteins (BruAb2_0487), two transmembrane proteins (BruAb2_0483) and a solute-binding protein (BruAb2_0484).

The protein resides in the cell inner membrane. Probably part of an ABC transporter complex. Probably responsible for energy coupling to the transport system. The protein is Putative ATP-binding protein BruAb2_0487 of Brucella abortus biovar 1 (strain 9-941).